Consider the following 329-residue polypeptide: GTP 3',8-cyclase (329 aa).

Residues Ala8 to Ala234 enclose the Radical SAM core domain. Arg17 provides a ligand contact to GTP. The [4Fe-4S] cluster site is built by Cys24 and Cys28. S-adenosyl-L-methionine is bound at residue Tyr30. Cys31 is a [4Fe-4S] cluster binding site. Arg68 contributes to the GTP binding site. Gly72 lines the S-adenosyl-L-methionine pocket. Residue Thr99 coordinates GTP. S-adenosyl-L-methionine is bound at residue Ser123. GTP is bound at residue Lys160. An S-adenosyl-L-methionine-binding site is contributed by Met194. [4Fe-4S] cluster contacts are provided by Cys257 and Cys260. Residue Arg262–Arg264 participates in GTP binding. Cys274 is a [4Fe-4S] cluster binding site.

This sequence belongs to the radical SAM superfamily. MoaA family. As to quaternary structure, monomer and homodimer. The cofactor is [4Fe-4S] cluster.

The catalysed reaction is GTP + AH2 + S-adenosyl-L-methionine = (8S)-3',8-cyclo-7,8-dihydroguanosine 5'-triphosphate + 5'-deoxyadenosine + L-methionine + A + H(+). Its pathway is cofactor biosynthesis; molybdopterin biosynthesis. In terms of biological role, catalyzes the cyclization of GTP to (8S)-3',8-cyclo-7,8-dihydroguanosine 5'-triphosphate. The polypeptide is GTP 3',8-cyclase (Escherichia coli O17:K52:H18 (strain UMN026 / ExPEC)).